We begin with the raw amino-acid sequence, 130 residues long: Small ribosomal subunit protein uS9 (130 aa).

This sequence belongs to the universal ribosomal protein uS9 family.

The polypeptide is Small ribosomal subunit protein uS9 (Aromatoleum aromaticum (strain DSM 19018 / LMG 30748 / EbN1) (Azoarcus sp. (strain EbN1))).